A 383-amino-acid polypeptide reads, in one-letter code: Erythronate-4-phosphate dehydrogenase (383 aa).

Substrate-binding residues include serine 45 and threonine 67. Residue aspartate 147 participates in NAD(+) binding. The active site involves arginine 208. Residue aspartate 232 coordinates NAD(+). Residue glutamate 237 is part of the active site. Histidine 254 functions as the Proton donor in the catalytic mechanism. Glycine 257 contacts NAD(+). Residue tyrosine 258 participates in substrate binding.

The protein belongs to the D-isomer specific 2-hydroxyacid dehydrogenase family. PdxB subfamily. Homodimer.

It localises to the cytoplasm. It catalyses the reaction 4-phospho-D-erythronate + NAD(+) = (R)-3-hydroxy-2-oxo-4-phosphooxybutanoate + NADH + H(+). It functions in the pathway cofactor biosynthesis; pyridoxine 5'-phosphate biosynthesis; pyridoxine 5'-phosphate from D-erythrose 4-phosphate: step 2/5. Its function is as follows. Catalyzes the oxidation of erythronate-4-phosphate to 3-hydroxy-2-oxo-4-phosphonooxybutanoate. This is Erythronate-4-phosphate dehydrogenase from Psychromonas ingrahamii (strain DSM 17664 / CCUG 51855 / 37).